Consider the following 189-residue polypeptide: GMP synthase [glutamine-hydrolyzing] subunit A (189 aa).

A Glutamine amidotransferase type-1 domain is found at Lys5–Tyr189. The Nucleophile role is filled by Cys79. Active-site residues include His166 and Glu168.

In terms of assembly, heterodimer composed of a glutamine amidotransferase subunit (A) and a GMP-binding subunit (B).

The catalysed reaction is XMP + L-glutamine + ATP + H2O = GMP + L-glutamate + AMP + diphosphate + 2 H(+). The protein operates within purine metabolism; GMP biosynthesis; GMP from XMP (L-Gln route): step 1/1. Catalyzes the synthesis of GMP from XMP. This chain is GMP synthase [glutamine-hydrolyzing] subunit A, found in Methanosarcina barkeri (strain Fusaro / DSM 804).